A 163-amino-acid chain; its full sequence is NADH-quinone oxidoreductase subunit I (163 aa).

2 consecutive 4Fe-4S ferredoxin-type domains span residues 55–84 (RRYP…IDAE) and 94–123 (TRYD…EGPN). The [4Fe-4S] cluster site is built by cysteine 64, cysteine 67, cysteine 70, cysteine 74, cysteine 103, cysteine 106, cysteine 109, and cysteine 113.

It belongs to the complex I 23 kDa subunit family. In terms of assembly, NDH-1 is composed of 14 different subunits. Subunits NuoA, H, J, K, L, M, N constitute the membrane sector of the complex. It depends on [4Fe-4S] cluster as a cofactor.

The protein localises to the cell inner membrane. The enzyme catalyses a quinone + NADH + 5 H(+)(in) = a quinol + NAD(+) + 4 H(+)(out). Functionally, NDH-1 shuttles electrons from NADH, via FMN and iron-sulfur (Fe-S) centers, to quinones in the respiratory chain. The immediate electron acceptor for the enzyme in this species is believed to be ubiquinone. Couples the redox reaction to proton translocation (for every two electrons transferred, four hydrogen ions are translocated across the cytoplasmic membrane), and thus conserves the redox energy in a proton gradient. The sequence is that of NADH-quinone oxidoreductase subunit I (nuoI) from Rhodobacter capsulatus (Rhodopseudomonas capsulata).